Here is a 419-residue protein sequence, read N- to C-terminus: Histidine--tRNA ligase (419 aa).

This sequence belongs to the class-II aminoacyl-tRNA synthetase family. As to quaternary structure, homodimer.

It is found in the cytoplasm. The catalysed reaction is tRNA(His) + L-histidine + ATP = L-histidyl-tRNA(His) + AMP + diphosphate + H(+). This is Histidine--tRNA ligase from Methylobacillus flagellatus (strain ATCC 51484 / DSM 6875 / VKM B-1610 / KT).